The sequence spans 347 residues: Uroporphyrinogen decarboxylase (347 aa).

Substrate-binding positions include 23–27 (RQAGR), Asp-73, Tyr-150, Thr-205, and His-323.

Belongs to the uroporphyrinogen decarboxylase family. Homodimer.

Its subcellular location is the cytoplasm. The enzyme catalyses uroporphyrinogen III + 4 H(+) = coproporphyrinogen III + 4 CO2. Its pathway is porphyrin-containing compound metabolism; protoporphyrin-IX biosynthesis; coproporphyrinogen-III from 5-aminolevulinate: step 4/4. Its function is as follows. Catalyzes the decarboxylation of four acetate groups of uroporphyrinogen-III to yield coproporphyrinogen-III. This is Uroporphyrinogen decarboxylase from Ruthia magnifica subsp. Calyptogena magnifica.